The chain runs to 295 residues: Bifunctional protein FolD (295 aa).

NADP(+)-binding positions include 166-168, Ser-195, and Ile-236; that span reads GRS.

The protein belongs to the tetrahydrofolate dehydrogenase/cyclohydrolase family. As to quaternary structure, homodimer.

It carries out the reaction (6R)-5,10-methylene-5,6,7,8-tetrahydrofolate + NADP(+) = (6R)-5,10-methenyltetrahydrofolate + NADPH. It catalyses the reaction (6R)-5,10-methenyltetrahydrofolate + H2O = (6R)-10-formyltetrahydrofolate + H(+). The protein operates within one-carbon metabolism; tetrahydrofolate interconversion. Its function is as follows. Catalyzes the oxidation of 5,10-methylenetetrahydrofolate to 5,10-methenyltetrahydrofolate and then the hydrolysis of 5,10-methenyltetrahydrofolate to 10-formyltetrahydrofolate. In Chlorobium chlorochromatii (strain CaD3), this protein is Bifunctional protein FolD.